A 382-amino-acid chain; its full sequence is RNA exonuclease 3 (382 aa).

The 147-residue stretch at 223–369 (VLALDCEMAY…EDAIAAMDVV (147 aa)) folds into the Exonuclease domain.

This sequence belongs to the REXO1/REXO3 family.

The protein localises to the cytoplasm. It is found in the nucleus. 3' to 5' exoribonuclease required for proper 3' end maturation of MRP RNA and of the U5L snRNA. This Eremothecium gossypii (strain ATCC 10895 / CBS 109.51 / FGSC 9923 / NRRL Y-1056) (Yeast) protein is RNA exonuclease 3 (REX3).